Consider the following 84-residue polypeptide: U4-theraphotoxin-Hhn1ac (84 aa).

The first 22 residues, 1 to 22, serve as a signal peptide directing secretion; sequence MKVTLIAILTCAAVLVLHTTAA. Residues 23–47 constitute a propeptide that is removed on maturation; it reads EELEESQLMEVGMPDTELAAVDEER. 3 cysteine pairs are disulfide-bonded: Cys-51/Cys-65, Cys-55/Cys-76, and Cys-70/Cys-81.

The protein belongs to the neurotoxin 12 (Hwtx-2) family. 02 (Hwtx-2) subfamily. Expressed by the venom gland.

The protein resides in the secreted. Its function is as follows. Postsynaptic neurotoxin. The chain is U4-theraphotoxin-Hhn1ac from Cyriopagopus hainanus (Chinese bird spider).